We begin with the raw amino-acid sequence, 574 residues long: Sorting nexin-33 (574 aa).

Residues 1–61 (MALKGRALYD…PASYVEIVRS (61 aa)) form the SH3 domain. The tract at residues 68–119 (ADYSSSPAGSPGAQVSLYNSPSVASPARSGGGSGFLSNQGSFEEDDDDDWDD) is disordered. 2 positions are modified to phosphoserine: S77 and S92. Over residues 109 to 119 (FEEDDDDDWDD) the composition is skewed to acidic residues. Residues 230–340 (FACSVEDPTK…HFLSCLDDKQ (111 aa)) form the PX domain. In terms of domain architecture, BAR spans 371–574 (LQDVEDRVDT…EKTLRMYDNL (204 aa)).

It belongs to the sorting nexin family. As to quaternary structure, homodimer (via BAR domain). Interacts with ADAM15. Interacts with FASLG. Interacts (via SH3 domain) with DNM1 and DNM2. Interacts with WASL. Interacts with FCHSD1 (via the F-BAR domain). Phosphorylated. Detected in heart and pancreas.

The protein resides in the cytoplasm. Its subcellular location is the cytosol. The protein localises to the membrane. It is found in the cytoplasmic vesicle membrane. Its function is as follows. Plays a role in the reorganization of the cytoskeleton, endocytosis and cellular vesicle trafficking via its interactions with membranes, WASL, DNM1 and DNM2. Acts both during interphase and at the end of mitotic cell divisions. Required for efficient progress through mitosis and cytokinesis. Required for normal formation of the cleavage furrow at the end of mitosis. Modulates endocytosis of cell-surface proteins, such as APP and PRNP; this then modulates the secretion of APP and PRNP peptides. Promotes membrane tubulation (in vitro). May promote the formation of macropinosomes. The polypeptide is Sorting nexin-33 (SNX33) (Homo sapiens (Human)).